A 342-amino-acid polypeptide reads, in one-letter code: MQIEDFDFHLPEELIAQTPLKDRTSSRLCVLDKQTSEITHRSFKDITTYLQAGDCLVLNDTKVLPARLYGVKSDTGAKIEVLLLHQQEEDTWEVLVKPAKKVKVGTEIIFGNGKLKATCIDLKDHGGRIMTFSYTGIFYEILDQLGEMPLPPYIKEQLPEQDRYQTVYAKEKGSAAAPTAGLHFTDKLLEDIKAMGVNIVFVTLHVGLGTFRPVSVDSVEDHDMHSEFYSMSESAAKTLNEAKAAGRRIISVGTTSTRTLETIVRDHDGKFVATRGWTDIFIYPPYKFRAIDGLITNFHLPKSTLIMMISALAGKEAILHAYNEAVKEEYRFFSFGDAMLIL.

Belongs to the QueA family. Monomer.

Its subcellular location is the cytoplasm. The catalysed reaction is 7-aminomethyl-7-carbaguanosine(34) in tRNA + S-adenosyl-L-methionine = epoxyqueuosine(34) in tRNA + adenine + L-methionine + 2 H(+). It participates in tRNA modification; tRNA-queuosine biosynthesis. Functionally, transfers and isomerizes the ribose moiety from AdoMet to the 7-aminomethyl group of 7-deazaguanine (preQ1-tRNA) to give epoxyqueuosine (oQ-tRNA). The protein is S-adenosylmethionine:tRNA ribosyltransferase-isomerase of Oceanobacillus iheyensis (strain DSM 14371 / CIP 107618 / JCM 11309 / KCTC 3954 / HTE831).